Consider the following 294-residue polypeptide: Metallophosphoesterase MPPED2 (294 aa).

Mn(2+)-binding residues include Asp-65, His-67, Asp-86, Asn-117, and His-213. 117–118 is a GMP binding site; sequence NH. GMP contacts are provided by residues 225 to 226 and 252 to 255; these read KE and GIHE. His-254 is a binding site for Mn(2+).

It belongs to the UPF0046 family. In terms of assembly, homodimer. Mn(2+) serves as cofactor. Requires Co(2+) as cofactor. As to expression, expressed predominantly in fetal brain.

Inhibited by nmolar levels of AMP and GMP. In terms of biological role, displays low metallophosphoesterase activity (in vitro). May play a role in the development of the nervous system. This Homo sapiens (Human) protein is Metallophosphoesterase MPPED2 (MPPED2).